The following is a 341-amino-acid chain: Glyceraldehyde-3-phosphate dehydrogenase 2 (341 aa).

Residues arginine 13–isoleucine 14, aspartate 35, and lysine 85 contribute to the NAD(+) site. Residues serine 157 to threonine 159, threonine 188, threonine 217 to glycine 218, and arginine 240 contribute to the D-glyceraldehyde 3-phosphate site. Residue cysteine 158 is the Nucleophile of the active site. Asparagine 322 contacts NAD(+).

Belongs to the glyceraldehyde-3-phosphate dehydrogenase family. Homotetramer.

It is found in the cytoplasm. The enzyme catalyses D-glyceraldehyde 3-phosphate + phosphate + NAD(+) = (2R)-3-phospho-glyceroyl phosphate + NADH + H(+). It participates in carbohydrate degradation; glycolysis; pyruvate from D-glyceraldehyde 3-phosphate: step 1/5. In Caenorhabditis briggsae, this protein is Glyceraldehyde-3-phosphate dehydrogenase 2.